The following is a 163-amino-acid chain: Acetolactate synthase isozyme 3 small subunit (163 aa).

The region spanning I4 to Q78 is the ACT domain.

Belongs to the acetolactate synthase small subunit family. As to quaternary structure, dimer of large and small chains.

The catalysed reaction is 2 pyruvate + H(+) = (2S)-2-acetolactate + CO2. It functions in the pathway amino-acid biosynthesis; L-isoleucine biosynthesis; L-isoleucine from 2-oxobutanoate: step 1/4. The protein operates within amino-acid biosynthesis; L-valine biosynthesis; L-valine from pyruvate: step 1/4. With respect to regulation, sensitive to valine inhibition. The polypeptide is Acetolactate synthase isozyme 3 small subunit (ilvH) (Escherichia coli (strain K12)).